A 106-amino-acid chain; its full sequence is uncharacterized protein (106 aa).

2 disordered regions span residues 33–64 (FKTSTRSTGKKRSKGSTSQDGKKQESLESRND) and 87–106 (NLTGLESGGSSPPFSLAVSK). Residues 52–63 (DGKKQESLESRN) are compositionally biased toward basic and acidic residues. Residues 87–99 (NLTGLESGGSSPP) show a composition bias toward polar residues.

It localises to the mitochondrion. This is an uncharacterized protein from Arabidopsis thaliana (Mouse-ear cress).